Here is a 589-residue protein sequence, read N- to C-terminus: ATP-dependent lipid A-core flippase (589 aa).

Helical transmembrane passes span 29 to 49, 70 to 90, 157 to 177, 261 to 281, and 283 to 303; these read LLLV…TGFL, WLPV…YITD, VIGA…TILV, MIGA…ALAG, and LTAG…PGLK. The 283-residue stretch at 32–314 folds into the ABC transmembrane type-1 domain; sequence VAALIAALIE…LTNVQNMVQR (283 aa). An ABC transporter domain is found at 346–582; sequence IEFRDVTARY…GGLYSHLHGM (237 aa). Residue 380-387 participates in ATP binding; it reads GRSGSGKS.

Belongs to the ABC transporter superfamily. Lipid exporter (TC 3.A.1.106) family. As to quaternary structure, homodimer.

The protein resides in the cell inner membrane. The enzyme catalyses ATP + H2O + lipid A-core oligosaccharideSide 1 = ADP + phosphate + lipid A-core oligosaccharideSide 2.. Functionally, involved in lipopolysaccharide (LPS) biosynthesis. Translocates lipid A-core from the inner to the outer leaflet of the inner membrane. Transmembrane domains (TMD) form a pore in the inner membrane and the ATP-binding domain (NBD) is responsible for energy generation. This chain is ATP-dependent lipid A-core flippase, found in Xanthomonas euvesicatoria pv. vesicatoria (strain 85-10) (Xanthomonas campestris pv. vesicatoria).